The sequence spans 93 residues: Non-histone chromosomal protein 6A (93 aa).

2 disordered regions span residues M1 to R23 and P69 to A93. Residues P7–K16 are compositionally biased toward basic residues. Positions P21–N89 form a DNA-binding region, HMG box. Residues P69 to L87 show a composition bias toward basic and acidic residues.

This sequence belongs to the NHP6 family. In terms of assembly, weakly associates with the stable SPT16-POB3 heterodimer to form the FACT (yFACT or SNP) complex, which is associated with nucleosomes. Multiple molecules of NHP6 (NHP6A and/or NHP6B) are required to recruit the SPT16-POB3 heterodimer to DNA.

The protein localises to the nucleus. It localises to the chromosome. Its function is as follows. DNA-binding protein that induces severe bending of DNA. Required for DNA-binding by the FACT complex, a general chromatin factor that acts to reorganize nucleosomes. The FACT complex is involved in multiple processes that require DNA as a template such as mRNA elongation, DNA replication and DNA repair. Also augments the fidelity of transcription by RNA polymerase III independently of any role in the FACT complex. Required for transcriptional initiation fidelity of some but not all tRNA genes. Seems to be functionally redundant with NHP6B. This chain is Non-histone chromosomal protein 6A (NHP6A), found in Saccharomyces cerevisiae (strain ATCC 204508 / S288c) (Baker's yeast).